A 221-amino-acid chain; its full sequence is Eukaryotic translation initiation factor 3 subunit K (221 aa).

In terms of domain architecture, PCI spans 46–207; the sequence is YDLEANLACL…NIKTKHITEK (162 aa).

Belongs to the eIF-3 subunit K family. In terms of assembly, component of the eukaryotic translation initiation factor 3 (eIF-3) complex.

Its subcellular location is the cytoplasm. In terms of biological role, component of the eukaryotic translation initiation factor 3 (eIF-3) complex, which is involved in protein synthesis of a specialized repertoire of mRNAs and, together with other initiation factors, stimulates binding of mRNA and methionyl-tRNAi to the 40S ribosome. The eIF-3 complex specifically targets and initiates translation of a subset of mRNAs involved in cell proliferation. The protein is Eukaryotic translation initiation factor 3 subunit K of Aedes aegypti (Yellowfever mosquito).